An 895-amino-acid chain; its full sequence is Tiger protein D1 (895 aa).

The first 21 residues, M1–S21, serve as a signal peptide directing secretion. Residues A22–G861 lie on the Extracellular side of the membrane. N29, N52, N171, N181, N253, N257, N277, N288, N351, N368, N407, N428, N451, N481, N507, N521, N573, N583, N593, N623, N652, N685, N720, N757, N766, N780, and N799 each carry an N-linked (GlcNAc...) asparagine glycan. Positions A295–Y381 constitute an IPT/TIG 1 domain. IPT/TIG domains are found at residues P560–L638 and P642–Y725. Residues A862–F882 traverse the membrane as a helical segment. The Cytoplasmic segment spans residues Y883 to N895.

It is found in the cell membrane. Functionally, may be involved in the regulation of aggregation. Activates tgrC1. In Dictyostelium discoideum (Social amoeba), this protein is Tiger protein D1 (tgrD1).